The chain runs to 512 residues: 2-isopropylmalate synthase (512 aa).

Residues 5–268 (LIIFDTTLRD…ELGIDTQHIV (264 aa)) enclose the Pyruvate carboxyltransferase domain. Positions 14, 202, 204, and 239 each coordinate Mn(2+). The regulatory domain stretch occupies residues 394 to 512 (GFVSLSQRSE…SKAERVAAQG (119 aa)).

This sequence belongs to the alpha-IPM synthase/homocitrate synthase family. LeuA type 1 subfamily. In terms of assembly, homodimer. Mn(2+) serves as cofactor.

It is found in the cytoplasm. The enzyme catalyses 3-methyl-2-oxobutanoate + acetyl-CoA + H2O = (2S)-2-isopropylmalate + CoA + H(+). The protein operates within amino-acid biosynthesis; L-leucine biosynthesis; L-leucine from 3-methyl-2-oxobutanoate: step 1/4. Catalyzes the condensation of the acetyl group of acetyl-CoA with 3-methyl-2-oxobutanoate (2-ketoisovalerate) to form 3-carboxy-3-hydroxy-4-methylpentanoate (2-isopropylmalate). This Paracidovorax citrulli (strain AAC00-1) (Acidovorax citrulli) protein is 2-isopropylmalate synthase.